Consider the following 1040-residue polypeptide: Nucleotide-binding oligomerization domain-containing protein 2 (1040 aa).

CARD domains lie at 26–122 (CEMC…LHGC) and 126–218 (HSLH…EAAT). The ATG16L1-binding motif motif lies at 63-77 (WEVLSWEDYEGFHLL). 9 residues coordinate ADP: threonine 239, tyrosine 252, threonine 253, glycine 302, serine 303, glycine 304, lysine 305, serine 306, and threonine 307. A required for CARD9 binding region spans residues 241–274 (DGAETLCLEDIYTENVLEVWADVGMAGPPQKSPA). Positions 293–618 (DTVLVVGEAG…FFAAFYLALS (326 aa)) constitute an NACHT domain. 299–306 (GEAGSGKS) provides a ligand contact to ATP. A lipid anchor (S-palmitoyl cysteine) is attached at cysteine 395. Histidine 603 contributes to the ADP binding site. LRR repeat units lie at residues 791-812 (RPVA…QLLP), 816-839 (VCKA…IECA), 844-865 (QLQK…SMAK), 872-884 (NFLA…NYIT), 900-920 (SLQF…QALA), 928-949 (SLRW…ALAL), 956-976 (MLEE…CSLA), 984-1005 (SLKI…ALLQ), and 1012-1032 (TILE…DKLG). Cysteine 1033 carries the S-palmitoyl cysteine lipid modification.

This sequence belongs to the NOD1-NOD2 family. In terms of assembly, homooligomer: homooligomerizes following muramyl dipeptide (MDP)-binding, promoting RIPK2 recruitment. Interacts (via CARD domain) with RIPK2 (via CARD domain). Following RIPK2 recruitment, RIPK2 homooligomerizes via its CARD domain and forms long filaments named RIPosomes. Interacts (via CARD domain) with ubiquitin; inhibiting interaction with RIPK2. Component of a signaling complex consisting of ARHGEF2, NOD2 and RIPK2. Interacts with ANKRD17 (via N-terminus). Interacts with HSPA1A; the interaction enhances NOD2 stability. Interacts (via both CARD domains) with HSP90; the interaction enhances NOD2 stability. Interacts (via CARD domain) with SOCS3; the interaction promotes NOD2 degradation. Interacts (via CARD domain) with ERBIN; the interaction inhibits activation of NOD2. Interacts with MAPKBP1; the interaction is enhanced in the presence of muramyl dipeptide (MDP) and inhibits NOD2 homooligomerization and activation. Interacts with INAVA; the interaction takes place upon Pattern recognition receptor (PRR) stimulation. Interacts (via NACHT domain) with CARD9. Interacts (via CARD domain) with CASP1; this interaction leads to IL1B processing. Also interacts with CASP4. Interacts with NLRP1; this interaction is enhanced in the presence of muramyl dipeptide (MDP) and leads to increased IL1B release. Interacts with NLRP12; this interaction promotes degradation of NOD2 through the ubiquitin-proteasome pathway. Interacts with ANKHD1, C10orf67, CHMP5, DOCK7, ENTR1, KRT15, LDOC1, PPP1R12C, PPP2R3B, TRIM41 and VIM. Interacts with MAVS; interaction takes place following single-stranded RNA (ssRNA)-binding. Interacts with ATG16L1. Interacts with IRGM; promoting IRGM 'Lys-63'-linked polyubiquitination, which is required for interactions with the core autophagy factors. Post-translationally, palmitoylated by ZDHHC5; palmitoylation is required for proper recruitment to the bacterial entry site and hence for proper signaling upon cognate peptidoglycan detection. Palmitoylation promotes localization to the cell membrane. Palmitoylation protects from SQSTM1/p62-dependent autophagic degradation. In terms of processing, polyubiquitinated by TRIM27, leading to proteasome-mediated degradation. Polyubiquitinated and degraded following muramyl dipeptide (MDP) stimulation, conferring MDP tolerance and preventing septic shock. Degraded via selective autophagy following interaction with IRGM. IRGM promotes NOD2-RIPK2 RIPosome recruitment to autophagosome membranes, promoting their SQSTM1/p62-dependent autophagic degradation. Post-translationally, O-glycosylated by OGT, O-GlcNAcylation increases protein stability. As to expression, expressed in monocytes, macrophages, dendritic cells, hepatocytes, preadipocytes, epithelial cells of oral cavity, lung and intestine, with higher expression in ileal Paneth cells and in intestinal stem cells. In terms of tissue distribution, expressed at higher level in leukocytes.

Its subcellular location is the cell membrane. It localises to the basolateral cell membrane. It is found in the cytoplasm. The protein resides in the mitochondrion. Its activity is regulated as follows. ADP-binding promotes an inactive closed conformation. In terms of biological role, pattern recognition receptor (PRR) that detects bacterial peptidoglycan fragments and other danger signals and plays an important role in gastrointestinal immunity. Specifically activated by muramyl dipeptide (MDP), a fragment of bacterial peptidoglycan found in every bacterial peptidoglycan type. NOD2 specifically recognizes and binds 6-O-phospho-MDP, the phosphorylated form of MDP, which is generated by NAGK. 6-O-phospho-MDP-binding triggers oligomerization that facilitates the binding and subsequent activation of the proximal adapter receptor-interacting RIPK2. Following recruitment, RIPK2 undergoes 'Met-1'- (linear) and 'Lys-63'-linked polyubiquitination by E3 ubiquitin-protein ligases XIAP, BIRC2, BIRC3 and the LUBAC complex, becoming a scaffolding protein for downstream effectors, triggering activation of the NF-kappa-B and MAP kinases signaling. This in turn leads to the transcriptional activation of hundreds of genes involved in immune response. Its ability to detect bacterial MDP plays a central role in maintaining the equilibrium between intestinal microbiota and host immune responses to control inflammation. An imbalance in this relationship results in dysbiosis, whereby pathogenic bacteria prevail on commensals, causing damage in the intestinal epithelial barrier as well as allowing bacterial invasion and inflammation. Acts as a regulator of appetite by sensing MDP in a subset of brain neurons: microbiota-derived MDP reach the brain, where they bind and activate NOD2 in inhibitory hypothalamic neurons, decreasing neuronal activity, thereby regulating satiety and body temperature. NOD2-dependent MDP-sensing of bacterial cell walls in the intestinal epithelial compartment contributes to sustained postnatal growth upon undernutrition. Also plays a role in antiviral response by acting as a sensor of single-stranded RNA (ssRNA) from viruses: upon ssRNA-binding, interacts with MAVS, leading to activation of interferon regulatory factor-3/IRF3 and expression of type I interferon. Also acts as a regulator of autophagy in dendritic cells via its interaction with ATG16L1, possibly by recruiting ATG16L1 at the site of bacterial entry. NOD2 activation in the small intestine crypt also contributes to intestinal stem cells survival and function: acts by promoting mitophagy via its association with ATG16L1. In addition to its main role in innate immunity, also regulates the adaptive immune system by acting as regulator of helper T-cell and regulatory T-cells (Tregs). Besides recognizing pathogens, also involved in the endoplasmic reticulum stress response: acts by sensing and binding to the cytosolic metabolite sphingosine-1-phosphate generated in response to endoplasmic reticulum stress, initiating an inflammation process that leads to activation of the NF-kappa-B and MAP kinases signaling. May also be involved in NLRP1 activation following activation by MDP, leading to CASP1 activation and IL1B release in macrophages. Functionally, acts as a pattern recognition receptor (PRR); able to activate NF-kappa-B. Its function is as follows. Can activate NF-kappa-B in a muramyl dipeptide (MDP)-independent manner. This Homo sapiens (Human) protein is Nucleotide-binding oligomerization domain-containing protein 2.